Consider the following 2303-residue polypeptide: MACKHGYPDVCPICTAVDATPDFEYLLMADGEWFPTDLLCVDLDDDVFWPSDTSTQPQTMEWTDVPLVCDTVMEPQGNASSSDKSNSQSSGNEGVIINNFYSNQYQNSIDLSASGGNAGDAPQNNGQLSSILGGAANAFATMAPLLMDQNTEEMENLSDRVASDKAGNSATNTQSTVGRLCGYGKSHHGEHPTSCADAATDKVLAAERYYTIDLASWTTSQEAFSHIRIPLPHVLAGEDGGVFGATLRRHYLCKTGWRVQVQCNASQFHAGSLLVFMAPEFYTGKGTKSGTMEPSDPFTMDTTWRSPQSAPTGYRYDRQAGFFAMNHQNQWQWTVYPHQILNLRTNTTVDLEVPYVNVAPSSSWTQHANWTLVVAVLSPLQYATGSSPDVQITASLQPVNPVFNGLRHETVLAQSPIPVTVREHQGCFYSTNPDTTVPIYGKTISTPSDYMCGEFSDLLELCKLPTFLGNPSTDNKRYPYFSATNSVPATSLVDYQVALSCSCTANSMLAAVARNFNQYRGSLNFLFVFTGAAMVKGKFRIAYTPPGAGKPTTRDQAMQATYAIWDLGLNSSFNFTAPFISPTHYRQTSYTSPTITSVDGWVTVWQLTPLTYPSGTPTHSDILTLVSAGDDFTLRMPISPTKWVPQGIDNAEKGKVSNDDASVDFVAEPVKLPENQTRVAFFYDRAVPIGMLRPGQNMETTFSYQENDFRLNCLLLTPLPSYCPDSSSGPVRTKAPVQWRWVRSGGANGANFPLMTKQDYAFLCFSPFTYYKCDLEVTVSAMGAGTVSSVLRWAPTGAPADVTDQLIGYTPSLGETRNPHMWIVGSGNSQISFVVPYNSPLSVLPAAWFNGWSDFGNTKDFGVAPTSDFGRIWIQGNSSASVRIRYKKMKVFCPRPTLFFPWPTPTTTKINADNPVPILELENPASLYRIDLFITFTDELITFDYKVHGRPVLTFRIPGFGLTPAGRMLVCMGAKPAHSPFTSSKSLYHVIFTSTCNSFSFTIYKGRYRSWKKPIHDELVDRGYTTFREFFKAVRGYHADYYKQRLIHDVEMNPGPVQSVFQPQGAVLTKSLAPQAGIQNILLRLLGIEGDCSEVSKAITVVTDLVAAWEKAKTTLVSPEFWSELILKTTKFIAASVLYLHNPDFTTTVCLSLMTGVDLLTNDSVFDWLKSKLSSFFRTPPPACPNVMQPQGPLREANEGFTFAKNIEWATKTIQSIVNWLTSWFKQEEDHPQSKLDKLLMEFPDHCRNIMDMRNGRKAYCECTASFKYFDDLYNLAVTCKRIPLASLCEKFKNRHDHSVTRPEPVVAVLRGAAGQGKSVTSQIIAQSVSKMAFGRQSVYSMPPDSEYFDGYENQFSVIMDDLGQNPDGEDFTVFCQMVSSTNFLPNMAHLERKGTPFTSSFIVATTNLPKFRPVTVAHYPAVDRRITFDFTVTAGPHCKTPAGMLDIEKAFDEIPGSKPQLACFSADCPLLHKRGVMFTCNRTKTVYNLQQVVKMVNDTITRKTENVKKMNSLVAQSPPDWQHFENILTCLRQNNAALQDQVDELQEAFTQARERSDFLSDWLKVSAIIFAGIVSLSAVIKLASKFKESIWPTPVRVELSEGEQAAYAGRARAQKQALQVLDIQGGGKVLAQAGNPVMDFELFCAKNMVSPITFYYPDKAEVTQSCLLLRAHLFVVNRHVAETEWTAFKLRDVRHERDTVVMRSVNRSGAETDLTFVKVTKGPLFKDNVNKFCSNKDDFPARNDTVTGIMNTGLAFVYSGNFLIGNQPVNTTTGACFNHCLHYRAQTRRGWCGSAIICNVNGKKAVYGMHSAGGGGLAAATIITRELIEAAEKSMLALEPQGAIVDISTGSVVHVPRKTKLRRTVAHDVFQPKFEPAVLSRYDPRTDKDVDVVAFSKHTTNMESLPPIFDIVCGEYANRVFTILGKDNGLLTVEQAVLGLSGMDPMEKDTSPGLPYTQQGLRRTDLLDFNTAKMTPQLDYAHSKLVLGVYDDVVYQSFLKDEIRPLEKIHEAKTRIVDVPPFAHCIWGRQLLGRFASKFQTKPGFELGSAIGTDPDVDWTRYAAELSGFNYVYDVDYSNFDASHSTAMFECLINNFFTEQNGFDRRIAEYLRSLAVSRHAYEDRRVLIRGGLPSGCAATSMLNTIMNNVIIRAALYLTYSNFEFDDIKVLSYGDDLLIGTNYQIDFNLVKERLAPFGYKITPANKTTTFPLTSHLQDVTFLKRRFVRFNSYLFRPQMDAVNLKAMVSYCKPGTLKEKLMSIALLAVHSGPDIYDEIFLPFRNVGIVVPTYDSMLYRWLSLFR.

A zinc finger spans residues 3-14; the sequence is CKHGYPDVCPIC. The segment at 30-46 is acidic; it reads DGEWFPTDLLCVDLDDD. A theilo region spans residues 60–73; it reads MEWTDVPLVCDTVM. Residues 73 to 93 form a disordered region; it reads MEPQGNASSSDKSNSQSSGNE. Gly-77 carries the N-myristoyl glycine; by host lipid modification. Over residues 80 to 90 the composition is skewed to low complexity; that stretch reads SSSDKSNSQSS. An intrachain disulfide couples Cys-501 to Cys-503. Residues 1041 to 1047 are host EIF4E binding; sequence YYKQRLI. The 166-residue stretch at 1283-1448 folds into the SF3 helicase domain; that stretch reads IPLASLCEKF…CKTPAGMLDI (166 aa). 1312–1319 serves as a coordination point for ATP; sequence GAAGQGKS. Tyr-1608 carries the O-(5'-phospho-RNA)-tyrosine modification. Positions 1636–1829 constitute a Peptidase C3 domain; sequence NPVMDFELFC…AATIITRELI (194 aa). Catalysis depends on for protease 3C activity residues His-1680, Asp-1714, and Cys-1793. Residues 2071–2189 enclose the RdRp catalytic domain; that stretch reads NYVYDVDYSN…GTNYQIDFNL (119 aa). Residues Asp-2077 and Asp-2175 each act as for RdRp activity in the active site.

It belongs to the picornaviruses polyprotein family. In terms of assembly, interacts with host EIF4E. Interacts with the leader protein. Interacts with host RAN; the complex L-RAN recruits cellular kinases responsible for the L-induced nucleocytoplasmic trafficking inhibition. The complex L-RAN can further bind to the host exportins XPO1/CRM1 and CSE1L/CAS. Interacts with the protein 2A. Interacts with host RNASEL; this interaction prevents RNASEL activation by its substrate 2'-5' oligoadenylates. Phosphorylated. In terms of processing, specific enzymatic cleavages by the viral protease in vivo yield a variety of precursors and mature proteins. The polyprotein seems to be cotranslationally cleaved at the 2A/2B junction by a ribosomal skip from one codon to the next without formation of a peptide bond. This process would release the P1-2A peptide from the translational complex. Post-translationally, during virion maturation, immature virions are rendered infectious following cleavage of VP0 into VP4 and VP2. This maturation seems to be an autocatalytic event triggered by the presence of RNA in the capsid and is followed by a conformational change of the particle. Uridylylated by the polymerase and is covalently linked to the 5'-end of genomic RNA. This uridylylated form acts as a nucleotide-peptide primer for the polymerase. In terms of processing, myristoylation is required during RNA encapsidation and formation of the mature virus particle.

It is found in the virion. The protein resides in the host cytoplasm. It localises to the host nucleus. Its subcellular location is the host nucleolus. The protein localises to the host cytoplasmic vesicle membrane. It catalyses the reaction RNA(n) + a ribonucleoside 5'-triphosphate = RNA(n+1) + diphosphate. The catalysed reaction is ATP + H2O = ADP + phosphate + H(+). It carries out the reaction Selective cleavage of Gln-|-Gly bond in the poliovirus polyprotein. In other picornavirus reactions Glu may be substituted for Gln, and Ser or Thr for Gly.. In terms of biological role, forms a complex with host RAN and probably binds to exportins carrying activated MAPK in order to mediate the hyperphosphorylation of host Phe/Gly containing nuclear pore proteins (Nups) resulting in cessation of active nucleocytoplasmic transport. Proteins with NLS signals fail to import, cellular mRNAs fail to export, and some proteins small enough for diffusion are not retained anymore (efflux). The resulting inhibition of cellular protein synthesis serves to ensure maximal viral gene expression and to evade host immune response. The leader protein also inhibits host interferon regulatory factor 3 (IRF3) dimerization, thereby blocking the transcriptional activation of IFN genes. Binds to host RNase L thereby preventing its activation by 2'-5' oligoadenylates in order to counteract the antiviral interferon-inducible OAS/RNase L pathway. Inhibits the integrated stress response (ISR) in the infected cell. Inhibits the host EIF2AK2/PKR by rendering this kinase unable to detect double-stranded RNA. Also impairs host stress granule formation probably by acting on a step downstream of EIF2AK2/PKR activation. Forms an icosahedral capsid of pseudo T=3 symmetry with capsid proteins VP2 and VP3. Together they form an icosahedral capsid composed of 60 copies of each VP1, VP2, and VP3, with a diameter of approximately 300 Angstroms. VP4 lies on the inner surface of the protein shell formed by VP1, VP2 and VP3. All the three latter proteins contain a beta-sheet structure called beta-barrel jelly roll. VP1 is situated at the 12 fivefold axes, whereas VP2 and VP3 are located at the quasi-sixfold axes. Its function is as follows. Lies on the inner surface of the capsid shell. After binding to the host receptor, the capsid undergoes conformational changes. Capsid protein VP4 is released, capsid protein VP1 N-terminus is externalized, and together, they shape a pore in the host membrane through which the viral genome is translocated into the host cell cytoplasm. After genome has been released, the channel shrinks. Functionally, VP0 precursor is a component of immature procapsids. In terms of biological role, involved in host translation shutoff by inhibiting cap-dependent mRNA translation. Nuclear localization is required for this function. The resulting inhibition of cellular protein synthesis serves to ensure maximal viral gene expression and to evade host immune response. Inhibits the phosphorylation of the leader protein. Binds to the RNA stem-loop essential for the ribosomal frameshift event and trans-activates the production of protein 2B*. Affects membrane integrity and causes an increase in membrane permeability. Its function is as follows. Associates with and induces structural rearrangements of intracellular membranes. It displays RNA-binding, nucleotide binding and NTPase activities. Functionally, serves as membrane anchor via its hydrophobic domain. In terms of biological role, forms a primer, VPg-pU, which is utilized by the polymerase for the initiation of RNA chains. Cysteine protease that generates mature viral proteins from the precursor polyprotein. In addition to its proteolytic activity, it binds to viral RNA, and thus influences viral genome replication. RNA and substrate cooperatively bind to the protease. Cleaves host PABP1, this cleavage is important for viral replication. Its function is as follows. Replicates the genomic and antigenomic RNAs by recognizing replications specific signals. Performs VPg uridylylation. This Mus musculus (Mouse) protein is Genome polyprotein.